The primary structure comprises 197 residues: dTTP/UTP pyrophosphatase (197 aa).

The Proton acceptor role is filled by aspartate 70.

Belongs to the Maf family. YhdE subfamily. It depends on a divalent metal cation as a cofactor.

The protein localises to the cytoplasm. It carries out the reaction dTTP + H2O = dTMP + diphosphate + H(+). The enzyme catalyses UTP + H2O = UMP + diphosphate + H(+). Nucleoside triphosphate pyrophosphatase that hydrolyzes dTTP and UTP. May have a dual role in cell division arrest and in preventing the incorporation of modified nucleotides into cellular nucleic acids. The protein is dTTP/UTP pyrophosphatase (yceF2) of Shigella boydii serotype 4 (strain Sb227).